The sequence spans 1188 residues: DNA-directed RNA polymerase subunit beta (1188 aa).

This sequence belongs to the RNA polymerase beta chain family. As to quaternary structure, the RNAP catalytic core consists of 2 alpha, 1 beta, 1 beta' and 1 omega subunit. When a sigma factor is associated with the core the holoenzyme is formed, which can initiate transcription.

It carries out the reaction RNA(n) + a ribonucleoside 5'-triphosphate = RNA(n+1) + diphosphate. In terms of biological role, DNA-dependent RNA polymerase catalyzes the transcription of DNA into RNA using the four ribonucleoside triphosphates as substrates. In Streptococcus sanguinis (strain SK36), this protein is DNA-directed RNA polymerase subunit beta.